Consider the following 72-residue polypeptide: Alpha-conotoxin SII (72 aa).

A signal peptide spans Met-1–Ser-21. A propeptide spanning residues Phe-22 to Arg-50 is cleaved from the precursor. The interval Pro-23–Gly-51 is disordered. Over residues Arg-26–Gly-49 the composition is skewed to basic and acidic residues. Disulfide bonds link Cys-52/Cys-68, Cys-53/Cys-58, and Cys-54/Cys-64. Positions Arg-70–Leu-72 are excised as a propeptide.

It belongs to the conotoxin A superfamily. The disulfide bond Cys-52-Cys-68 (Cys I-VI), which corresponds to an extra disulfide bond when compared to the cysteine framework I (CC-C-C), does contribute to conotoxin SII stability and imparts a unique binding mode at the nAChR. In terms of tissue distribution, expressed by the venom duct.

It localises to the secreted. Alpha-conotoxins act on postsynaptic membranes, they bind to the nicotinic acetylcholine receptors (nAChR) and thus inhibit them. This toxin potently inhibits the rodent muscle nAChR (IC(50)=120 nM (adult subtype, alpha-1-beta-1-delta-epsilon/CHRNA1-CHRNB1-CHRND-CHRNE) and IC(50)=370 nM (fetal subtype, alpha-1-beta-1-gamma-delta/CHRNA1-CHRNB1-CHRNG-CHRND)) and weakly inhibits neuronal nAChRs. In contrast to alpha-conotoxins bearing 2 disulfide bonds (framework I), this conotoxin acts via a unique binding mode with the helix and the N- and C-termini buried in the binding pocket of muscle nAChRs. This is Alpha-conotoxin SII from Conus striatus (Striated cone).